Here is a 53-residue protein sequence, read N- to C-terminus: Sec-independent protein translocase protein TatA (53 aa).

Residues 1-21 (MGMSLSHLLIVLLIIFVLFGA) traverse the membrane as a helical segment.

It belongs to the TatA/E family. In terms of assembly, the Tat system comprises two distinct complexes: a TatABC complex, containing multiple copies of TatA, TatB and TatC subunits, and a separate TatA complex, containing only TatA subunits. Substrates initially bind to the TatABC complex, which probably triggers association of the separate TatA complex to form the active translocon.

The protein resides in the cell inner membrane. In terms of biological role, part of the twin-arginine translocation (Tat) system that transports large folded proteins containing a characteristic twin-arginine motif in their signal peptide across membranes. TatA could form the protein-conducting channel of the Tat system. This chain is Sec-independent protein translocase protein TatA, found in Rickettsia conorii (strain ATCC VR-613 / Malish 7).